The chain runs to 389 residues: tRNA-specific 2-thiouridylase MnmA (389 aa).

ATP contacts are provided by residues 33 to 40 (GLSGGVDS) and Leu59. The Nucleophile role is filled by Cys120. Cysteines 120 and 219 form a disulfide. Gly145 serves as a coordination point for ATP. The segment at 169 to 171 (KDQ) is interaction with tRNA. Residue Cys219 is the Cysteine persulfide intermediate of the active site. The interval 326-327 (RY) is interaction with tRNA.

It belongs to the MnmA/TRMU family.

The protein resides in the cytoplasm. The catalysed reaction is S-sulfanyl-L-cysteinyl-[protein] + uridine(34) in tRNA + AH2 + ATP = 2-thiouridine(34) in tRNA + L-cysteinyl-[protein] + A + AMP + diphosphate + H(+). Catalyzes the 2-thiolation of uridine at the wobble position (U34) of tRNA, leading to the formation of s(2)U34. In Synechococcus sp. (strain WH7803), this protein is tRNA-specific 2-thiouridylase MnmA.